The primary structure comprises 616 residues: MGKIIGIDLGTTNSCVAVMEGGEPVVITNSEGARTTPSVVSFQADGERLVGQVAKRQSITNPDKTIISIKRHMGTSYKVDIDGKNYSPQEISAMVLQKIKADAESYLGESVTQAVITVPAYFNDSERQATKDAGKIAGLEVLRIINEPTAAALAYGLDKMDSNHKILVYDLGGGTFDVSILELGDGVFEVLSTNGDTKLGGDDFDQKVMDYIAETFKAENGIDLRQDKMALQRLKEAAEKAKIELSSSMQTNINLPFITADATGPKHIDLNLTRAKFNEITHDLVQRSIEPMKKALSDAAISIDEIEKIILVGGSTRIPAVVEAVKNFTGKDPSKGVNPDECVAVGAAVQAGVLTGEVKDVLLLDVTPLTLGIETAGGIATPLIERNTTIPTKKSQIFSTAADSQTSVEINVVQGERQMAMDNKSLGRFTLSGIAPAPRGIPQIEVTFDIDANGIVKVSALDKGTGKEANITITASTNLNDEEIDKAVKEAEKFAEEDKKRKEKVETLNNADQLIYQTEKALTELGDKVSAEDKAKVTEKLEALKAIKDGEDLEAIKKATEELTQEFYAVSSKVYAAAGGDPSQAGGFDPNAAGGAQQAPHDDNVVDADFKVDDDK.

At T175 the chain carries Phosphothreonine; by autocatalysis. Residues G579 to V605 are disordered.

It belongs to the heat shock protein 70 family.

Its function is as follows. Acts as a chaperone. This is Chaperone protein DnaK from Clostridium botulinum (strain Alaska E43 / Type E3).